The primary structure comprises 173 residues: Alpha-crystallin A chain (173 aa).

M1 is modified (N-acetylmethionine). Residues 1 to 63 (MDVTIQHPWF…RTVLDSGISE (63 aa)) form a required for complex formation with BFSP1 and BFSP2 region. Q6 carries the deamidated glutamine; partial modification. S45 carries the post-translational modification Phosphoserine. Q50 carries the deamidated glutamine; partial modification. The sHSP domain maps to 52 to 162 (LFRTVLDSGI…GPSERAIPVS (111 aa)). K70 and K99 each carry N6-acetyllysine. Residues H100, E102, and H107 each contribute to the Zn(2+) site. Positions 145–173 (KVASGLDAGPSERAIPVSREEKPSSAPSS) are disordered. O-linked (GlcNAc) serine glycosylation occurs at S162.

This sequence belongs to the small heat shock protein (HSP20) family. As to quaternary structure, heteromer composed of three CRYAA and one CRYAB subunits. Zinc coordination is achieved at least by His-100, Glu-102 and His-107. His-100 and Glu-102 come from the same molecule within the oligomer, while His-107 residue is provided by another molecule. Inter-subunit bridging via zinc ions enhances stability, which is crucial as there is no protein turn over in the lens. Can also form homodimers and homotetramers (dimers of dimers) which serve as the building blocks of homooligomers. Part of a complex required for lens intermediate filament formation composed of BFSP1, BFSP2 and CRYAA. Post-translationally, acetylation at Lys-70 may increase chaperone activity. Undergoes age-dependent proteolytical cleavage at the C-terminus.

The protein localises to the cytoplasm. Its subcellular location is the nucleus. Functionally, contributes to the transparency and refractive index of the lens. Acts as a chaperone, preventing aggregation of various proteins under a wide range of stress conditions. Required for the correct formation of lens intermediate filaments as part of a complex composed of BFSP1, BFSP2 and CRYAA. The polypeptide is Alpha-crystallin A chain (CRYAA) (Erinaceus europaeus (Western European hedgehog)).